The sequence spans 161 residues: Allophycocyanin beta chain (161 aa).

Asn71 is subject to N4-methylasparagine. A (2R,3E)-phycocyanobilin-binding site is contributed by Cys81.

It belongs to the phycobiliprotein family. In terms of assembly, heterodimer of an alpha and a beta chain. In terms of processing, contains one covalently linked phycocyanobilin chromophore.

The protein localises to the cellular thylakoid membrane. Its function is as follows. Light-harvesting photosynthetic bile pigment-protein from the phycobiliprotein complex. Allophycocyanin has a maximum absorption at approximately 650 nanometers. The chain is Allophycocyanin beta chain (apcB) from Thermosynechococcus vestitus (strain NIES-2133 / IAM M-273 / BP-1).